Consider the following 265-residue polypeptide: Apolipoprotein A-I (265 aa).

Residues 1-18 (MKAVVLTLAVLFLTGSQA) form the signal peptide. Tandem repeats lie at residues 67–88 (LKLL…EQLG) and 89–110 (PVTR…QEMN). Residues 67–265 (LKLLDNWDSL…DEASKKLNAQ (199 aa)) are 10 X approximate tandem repeats. At methionine 109 the chain carries Methionine sulfoxide. One copy of the 3; half-length repeat lies at 111-121 (KDLQEVKQKVQ). 5 consecutive repeat copies span residues 122–142 (PYLD…RQKV), 144–165 (PLGE…DKLT), 166–187 (PLAE…QQLA), 188–209 (PYSD…EGGG), and 210–230 (SLVQ…EKAK). The stretch at 231–241 (PALEDLRQGLL) is one 9; half-length repeat. The stretch at 242–265 (PVLENLKVSILAAIDEASKKLNAQ) is repeat 10.

It belongs to the apolipoprotein A1/A4/E family. In terms of assembly, homodimer. Interacts with APOA1BP and CLU. Component of a sperm activating protein complex (SPAP), consisting of APOA1, an immunoglobulin heavy chain, an immunoglobulin light chain and albumin. Interacts with NDRG1. Interacts with SCGB3A2. Interacts with NAXE and YJEFN3. Post-translationally, glycosylated. In terms of processing, palmitoylated. Phosphorylation sites are present in the extracellular medium. Major protein of plasma HDL, also found in chylomicrons.

It is found in the secreted. In terms of biological role, participates in the reverse transport of cholesterol from tissues to the liver for excretion by promoting cholesterol efflux from tissues and by acting as a cofactor for the lecithin cholesterol acyltransferase (LCAT). As part of the SPAP complex, activates spermatozoa motility. In Balaenoptera acutorostrata scammoni (North Pacific minke whale), this protein is Apolipoprotein A-I (APOA1).